A 196-amino-acid polypeptide reads, in one-letter code: Nucleoside triphosphate pyrophosphatase (196 aa).

Aspartate 73 acts as the Proton acceptor in catalysis.

It belongs to the Maf family. The cofactor is a divalent metal cation.

It localises to the cytoplasm. The enzyme catalyses a ribonucleoside 5'-triphosphate + H2O = a ribonucleoside 5'-phosphate + diphosphate + H(+). The catalysed reaction is a 2'-deoxyribonucleoside 5'-triphosphate + H2O = a 2'-deoxyribonucleoside 5'-phosphate + diphosphate + H(+). Functionally, nucleoside triphosphate pyrophosphatase. May have a dual role in cell division arrest and in preventing the incorporation of modified nucleotides into cellular nucleic acids. This is Nucleoside triphosphate pyrophosphatase from Anaplasma marginale (strain Florida).